Here is a 97-residue protein sequence, read N- to C-terminus: Aspartyl/glutamyl-tRNA(Asn/Gln) amidotransferase subunit C (97 aa).

The protein belongs to the GatC family. As to quaternary structure, heterotrimer of A, B and C subunits.

It carries out the reaction L-glutamyl-tRNA(Gln) + L-glutamine + ATP + H2O = L-glutaminyl-tRNA(Gln) + L-glutamate + ADP + phosphate + H(+). The catalysed reaction is L-aspartyl-tRNA(Asn) + L-glutamine + ATP + H2O = L-asparaginyl-tRNA(Asn) + L-glutamate + ADP + phosphate + 2 H(+). In terms of biological role, allows the formation of correctly charged Asn-tRNA(Asn) or Gln-tRNA(Gln) through the transamidation of misacylated Asp-tRNA(Asn) or Glu-tRNA(Gln) in organisms which lack either or both of asparaginyl-tRNA or glutaminyl-tRNA synthetases. The reaction takes place in the presence of glutamine and ATP through an activated phospho-Asp-tRNA(Asn) or phospho-Glu-tRNA(Gln). In Cyanothece sp. (strain PCC 7425 / ATCC 29141), this protein is Aspartyl/glutamyl-tRNA(Asn/Gln) amidotransferase subunit C.